We begin with the raw amino-acid sequence, 211 residues long: uncharacterized protein (211 aa).

The interval L187–D211 is disordered. The segment covering E201–D211 has biased composition (basic and acidic residues).

This is an uncharacterized protein from Spiroplasma citri.